The primary structure comprises 525 residues: MARKALKLASWTSVALAASGVYLYSNNYLDPNDFGAVRVGRAVATTAVISYDYLTSLRSVPYGSEEYLQRRSQVHLRSARRLFELCCANRGTFIKVGQHLGALDYLLPEEYTSTLKVLHSQAPQSSMQEVRQVIREDLGKEIHDLFLSFDDTPLGAASLAQVHKAVLHDGRTVAVKVQHPKVQAQSSKDILLMEVLVLAVKQLFPDFEFMWLVDEAKKNLPLELDFLNEGRNAEKVAHMLRHFDFLKVPQIHWELSTKRVLLMEFVEGGQVNDRAYMEKNQIDVNEISCHLGKMYSEMIFVNGFVHCDPHPGNVLVRKRPDTGKAEIVLLDHGLYQVLTEEFRLDYCHLWQSLIWTDMDGLKQYSQRLGAADLYPLFACMLTARSWDSVKQGIGQAPVSATEDSEIRNNAACYLPEISQLLNHVPRQMLLILKTNDLLRSIETTLGTRSSASSFLNMSRCCIRALAEHKKRDAGSFFRRTQISFSEAFSLWQINLHELLLRVRALRLACWVSALLGWLTRAPHRM.

Residues 148–477 (SFDDTPLGAA…HKKRDAGSFF (330 aa)) enclose the Protein kinase domain. ATP-binding positions include 154-162 (LGAASLAQV) and Lys-176. Asp-308 acts as the Proton acceptor in catalysis.

This sequence belongs to the protein kinase superfamily. ADCK protein kinase family.

The protein localises to the mitochondrion. Functionally, appears to be essential for maintaining mitochondrial cristae formation and mitochondrial function by acting via YME1L1 in a kinase-independent manner to regulate essential mitochondrial structural proteins OPA1 and IMMT. The action of this enzyme is not yet clear. It is not known if it has protein kinase activity and what type of substrate it would phosphorylate (Ser, Thr or Tyr). This is AarF domain-containing protein kinase 1 (Adck1) from Mus musculus (Mouse).